The following is a 294-amino-acid chain: NAD kinase (294 aa).

Asp74 acts as the Proton acceptor in catalysis. NAD(+)-binding positions include 74-75, Arg79, 149-150, Asp179, 190-195, and Ala214; these read DG, NE, and TGYSLS.

The protein belongs to the NAD kinase family. A divalent metal cation is required as a cofactor.

It localises to the cytoplasm. The catalysed reaction is NAD(+) + ATP = ADP + NADP(+) + H(+). In terms of biological role, involved in the regulation of the intracellular balance of NAD and NADP, and is a key enzyme in the biosynthesis of NADP. Catalyzes specifically the phosphorylation on 2'-hydroxyl of the adenosine moiety of NAD to yield NADP. This Flavobacterium johnsoniae (strain ATCC 17061 / DSM 2064 / JCM 8514 / BCRC 14874 / CCUG 350202 / NBRC 14942 / NCIMB 11054 / UW101) (Cytophaga johnsonae) protein is NAD kinase.